The primary structure comprises 550 residues: CTP synthase (550 aa).

Residues 1 to 277 (MNGSADAGPR…GRAVERALGL (277 aa)) are amidoligase domain. Ser-23 is a binding site for CTP. Ser-23 provides a ligand contact to UTP. ATP is bound at residue 24–29 (SLGKGI). Tyr-64 serves as a coordination point for L-glutamine. Asp-81 lines the ATP pocket. Residues Asp-81 and Glu-151 each contribute to the Mg(2+) site. Residues 158–160 (DIE), 198–203 (KTKPTQ), and Lys-234 each bind CTP. UTP contacts are provided by residues 198–203 (KTKPTQ) and Lys-234. One can recognise a Glutamine amidotransferase type-1 domain in the interval 302-549 (KIAIAGKYVK…VEAALAYQER (248 aa)). Gly-364 serves as a coordination point for L-glutamine. Cys-391 serves as the catalytic Nucleophile; for glutamine hydrolysis. L-glutamine contacts are provided by residues 392–395 (LGLQ), Glu-415, and Arg-472. Active-site residues include His-522 and Glu-524.

It belongs to the CTP synthase family. In terms of assembly, homotetramer.

It catalyses the reaction UTP + L-glutamine + ATP + H2O = CTP + L-glutamate + ADP + phosphate + 2 H(+). It carries out the reaction L-glutamine + H2O = L-glutamate + NH4(+). The enzyme catalyses UTP + NH4(+) + ATP = CTP + ADP + phosphate + 2 H(+). It participates in pyrimidine metabolism; CTP biosynthesis via de novo pathway; CTP from UDP: step 2/2. With respect to regulation, allosterically activated by GTP, when glutamine is the substrate; GTP has no effect on the reaction when ammonia is the substrate. The allosteric effector GTP functions by stabilizing the protein conformation that binds the tetrahedral intermediate(s) formed during glutamine hydrolysis. Inhibited by the product CTP, via allosteric rather than competitive inhibition. Functionally, catalyzes the ATP-dependent amination of UTP to CTP with either L-glutamine or ammonia as the source of nitrogen. Regulates intracellular CTP levels through interactions with the four ribonucleotide triphosphates. The protein is CTP synthase of Thermus thermophilus (strain ATCC BAA-163 / DSM 7039 / HB27).